Consider the following 260-residue polypeptide: Thrombin-like enzyme bhalternin (260 aa).

The signal sequence occupies residues 1 to 18; the sequence is MVLIRVLANLLILQLSYA. The propeptide occupies 19 to 24; it reads QKASEL. The region spanning 25-251 is the Peptidase S1 domain; it reads VIGGDECNIN…YSEWIQSIIA (227 aa). 5 cysteine pairs are disulfide-bonded: Cys31–Cys165, Cys50–Cys66, Cys144–Cys212, Cys176–Cys191, and Cys202–Cys227. A glycan (N-linked (GlcNAc...) asparagine) is linked at Asn44. A glycan (N-linked (GlcNAc...) asparagine) is linked at Asn81.

This sequence belongs to the peptidase S1 family. Snake venom subfamily. Monomer. Expressed by the venom gland.

The protein resides in the secreted. Inhibited by benzamidine and partially inhibited by EDTA. Functionally, thrombin-like snake venom serine protease that induces blood clotting in vitro, defibrinogenation in vivo (by intraperitoneal injection into mice), albuminolytic and fibrinogenolytic activities. Preferentially cleaves the alpha chain of fibrinogen (FGA). Causes hemolysis in the heart, causes apparent hyperemia and lymphocytic interstitial pneumonitis in the lung, causes necrosis and inflammatory infiltrate in the liver, and causes glomerular congestion in the kidney. Also provokes a drastic myonecrosis. This is Thrombin-like enzyme bhalternin from Bothrops alternatus (Urutu).